A 200-amino-acid chain; its full sequence is Transcription elongation factor A protein-like 5 (200 aa).

Basic and acidic residues-rich tracts occupy residues 1 to 49 (MEKF…KLEV), 61 to 85 (GEGKPEKQGKSDGEGKRQGESKPDS), 94 to 106 (RAAEKRPAEDYVP), 114 to 153 (DRGTDDSPKNSQEDLQDRHVSSEEMMRECADMTRAQEELR), and 190 to 200 (GQKDLEDAPFV). The segment at 1–200 (MEKFYKENEG…QKDLEDAPFV (200 aa)) is disordered.

It belongs to the TFS-II family. TFA subfamily.

It is found in the nucleus. Functionally, may be involved in transcriptional regulation. The protein is Transcription elongation factor A protein-like 5 (Tceal5) of Mus musculus (Mouse).